The sequence spans 336 residues: MYRGLFLISEAVISRIEKKVLSGGKILFAEACDLALHCARADLDRLLALARQVGSLHHGKSIDLCSIVNARSGRCSEDCKFCAQSSHYSTGVDSYALVDPDYVLALAKQNEAYGVSRFSLVTAGRAVSPAFLREVASIYRRLGEETSLAPCASMGLLEPETAEMLVEMGVRRYHCNLETSASFFSEVCTSHTWQDKVATIEHARRAGLEVCSGGIIGLGESMEQRIELAFELRDLEVLSIPLNILNPIANTPFADLPALTEREILITFALFRLINPRAIVRTAGGRNLLAGQQKKLFLAGANGAIVGDYLTTSGDGLKKDIDMFLNLGFSIGSREK.

Positions 57–286 (HHGKSIDLCS…RAIVRTAGGR (230 aa)) constitute a Radical SAM core domain. [4Fe-4S] cluster is bound by residues cysteine 75, cysteine 79, and cysteine 82. [2Fe-2S] cluster is bound by residues serine 119, cysteine 151, cysteine 211, and arginine 281.

It belongs to the radical SAM superfamily. Biotin synthase family. In terms of assembly, homodimer. [4Fe-4S] cluster is required as a cofactor. [2Fe-2S] cluster serves as cofactor.

The enzyme catalyses (4R,5S)-dethiobiotin + (sulfur carrier)-SH + 2 reduced [2Fe-2S]-[ferredoxin] + 2 S-adenosyl-L-methionine = (sulfur carrier)-H + biotin + 2 5'-deoxyadenosine + 2 L-methionine + 2 oxidized [2Fe-2S]-[ferredoxin]. The protein operates within cofactor biosynthesis; biotin biosynthesis; biotin from 7,8-diaminononanoate: step 2/2. Catalyzes the conversion of dethiobiotin (DTB) to biotin by the insertion of a sulfur atom into dethiobiotin via a radical-based mechanism. This Desulfotalea psychrophila (strain LSv54 / DSM 12343) protein is Biotin synthase.